Here is a 304-residue protein sequence, read N- to C-terminus: HTH-type transcriptional regulator AdmX (304 aa).

Positions 1 to 58 constitute an HTH lysR-type domain; sequence MKLRHLEIFYTVMTCGSLSRAAESLNISQPAASKSLKNAELKLGFKLFQRVRGKLLPS. The segment at residues 18-37 is a DNA-binding region (H-T-H motif); the sequence is LSRAAESLNISQPAASKSLK.

It belongs to the LysR transcriptional regulatory family.

It localises to the cytoplasm. Its activity is regulated as follows. AdmX-mediated transcription is inhibited by indole-3-acetic and indole-3-pyruvic acids. AdmX recognizes and binds the auxin indole-3-acetic acid (IAA), which causes conformational changes in AdmX that result in the inhibition of the expression of the andrimid gene cluster and the suppression of antibiotic production. It also recognizes indole-3-pyruvic acid (IPA), an intermediate of the main IAA biosynthetic pathway in plants and plant beneficial bacteria, which also prevents andrimid synthesis, but to a much lesser extent. Functionally, positively regulates the biosynthesis of andrimid, a broad-spectrum antibiotic, by activating the expression of the adm biosynthetic gene cluster. It specifically binds to a region within the adm promoter. The polypeptide is HTH-type transcriptional regulator AdmX (Serratia plymuthica).